We begin with the raw amino-acid sequence, 170 residues long: Protein-lysine myristoyltransferase HlyC (170 aa).

The active site involves H23. H151 is a heme binding site.

This sequence belongs to the RTX toxin acyltransferase family. Monomer. Post-translationally, proteolytically cleaved by the protease systems ClpAP, ClpXP and FtsH, leading to its degradation.

Its subcellular location is the cytoplasm. The enzyme catalyses tetradecanoyl-[ACP] + L-lysyl-[protein] = N(6)-tetradecanoyl-L-lysyl-[protein] + holo-[ACP] + H(+). The acyltransferase activity is inhibited by heme. Functionally, protein-lysine myristoyltransferase that catalyzes myristoylation of the protoxin (HlyA) at two internal lysine residues, thereby converting it to the active toxin. The chain is Protein-lysine myristoyltransferase HlyC from Escherichia coli.